The sequence spans 559 residues: (R)-mandelonitrile lyase 1 (559 aa).

The first 27 residues, 1 to 27 (MEKSTMSVILFVLHLLVLHLQYSEVHS), serve as a signal peptide directing secretion. 2 N-linked (GlcNAc...) asparagine glycosylation sites follow: N30 and N44. FAD-binding positions include 63 to 64 (TS), 82 to 83 (ER), T133, and 137 to 140 (NAGV). N-linked (GlcNAc...) asparagine glycosylation is found at N145, N162, N178, and N218. V244 serves as a coordination point for FAD. N252, N255, N309, N380, N402, N420, and N467 each carry an N-linked (GlcNAc...) asparagine glycan. A disulfide bond links C427 and C478. A substrate-binding site is contributed by Y485. 486–487 (WH) provides a ligand contact to FAD. The Proton donor role is filled by H487. Residue H525 is the Proton acceptor of the active site. An FAD-binding site is contributed by 526–527 (PQ).

This sequence belongs to the GMC oxidoreductase family. As to quaternary structure, monomer. It depends on FAD as a cofactor.

It catalyses the reaction (R)-mandelonitrile = benzaldehyde + hydrogen cyanide. Its function is as follows. Involved in cyanogenesis, the release of HCN from injured tissues. Catalyzes the stereospecific addition of HCN to a variety of aldehydes in vitro. It is a major seed constituent, and could have the additional role of a storage form for reduced nitrogen. The polypeptide is (R)-mandelonitrile lyase 1 (MDL1) (Prunus dulcis (Almond)).